The chain runs to 262 residues: ATP synthase subunit a (262 aa).

6 helical membrane passes run 24–44 (AVHLDTLFFSLLAGVIFLFVF), 84–104 (VIAPLALTIFCWVFIMNAIDL), 129–149 (DISATLGMSICVFFLILFYTV), 165–185 (PFNHWVFIPVNFILETVTLLA), 194–214 (LFGNMYAGELIFILIAVMYMA), and 228–248 (LVWAIFHILVITLQAFIFMML).

The protein belongs to the ATPase A chain family. In terms of assembly, F-type ATPases have 2 components, CF(1) - the catalytic core - and CF(0) - the membrane proton channel. CF(1) has five subunits: alpha(3), beta(3), gamma(1), delta(1), epsilon(1). CF(0) has three main subunits: a(1), b(2) and c(9-12). The alpha and beta chains form an alternating ring which encloses part of the gamma chain. CF(1) is attached to CF(0) by a central stalk formed by the gamma and epsilon chains, while a peripheral stalk is formed by the delta and b chains.

Its subcellular location is the cell inner membrane. Its function is as follows. Key component of the proton channel; it plays a direct role in the translocation of protons across the membrane. In Actinobacillus pleuropneumoniae serotype 7 (strain AP76), this protein is ATP synthase subunit a.